Consider the following 508-residue polypeptide: tRNA-2-methylthio-N(6)-dimethylallyladenosine synthase (508 aa).

Residues 13-131 (KTYEVRTYGC…LPVLLERARV (119 aa)) form the MTTase N-terminal domain. [4Fe-4S] cluster is bound by residues cysteine 22, cysteine 60, cysteine 94, cysteine 168, cysteine 172, and cysteine 175. One can recognise a Radical SAM core domain in the interval 154–385 (RESAYAAWVS…ALQEEISWDE (232 aa)). Residues 387-455 (KKQVGRTLEL…PHHLLAEGPV (69 aa)) form the TRAM domain.

The protein belongs to the methylthiotransferase family. MiaB subfamily. In terms of assembly, monomer. [4Fe-4S] cluster serves as cofactor.

The protein resides in the cytoplasm. The catalysed reaction is N(6)-dimethylallyladenosine(37) in tRNA + (sulfur carrier)-SH + AH2 + 2 S-adenosyl-L-methionine = 2-methylsulfanyl-N(6)-dimethylallyladenosine(37) in tRNA + (sulfur carrier)-H + 5'-deoxyadenosine + L-methionine + A + S-adenosyl-L-homocysteine + 2 H(+). Catalyzes the methylthiolation of N6-(dimethylallyl)adenosine (i(6)A), leading to the formation of 2-methylthio-N6-(dimethylallyl)adenosine (ms(2)i(6)A) at position 37 in tRNAs that read codons beginning with uridine. The chain is tRNA-2-methylthio-N(6)-dimethylallyladenosine synthase from Streptomyces avermitilis (strain ATCC 31267 / DSM 46492 / JCM 5070 / NBRC 14893 / NCIMB 12804 / NRRL 8165 / MA-4680).